Consider the following 621-residue polypeptide: Chaperone protein DnaK (621 aa).

T179 is subject to Phosphothreonine; by autocatalysis. The span at 583 to 605 (SQVQDTQGAAQGQSQGNPQQTAD) shows a compositional bias: polar residues. Residues 583-621 (SQVQDTQGAAQGQSQGNPQQTADNRGKVVDAEIVDENKE) form a disordered region. The span at 606-621 (NRGKVVDAEIVDENKE) shows a compositional bias: basic and acidic residues.

This sequence belongs to the heat shock protein 70 family.

In terms of biological role, acts as a chaperone. In Endomicrobium trichonymphae, this protein is Chaperone protein DnaK.